The sequence spans 149 residues: D-aminoacyl-tRNA deacylase (149 aa).

Positions 137-138 match the Gly-cisPro motif, important for rejection of L-amino acids motif; sequence GP.

This sequence belongs to the DTD family. Homodimer.

The protein resides in the cytoplasm. The enzyme catalyses glycyl-tRNA(Ala) + H2O = tRNA(Ala) + glycine + H(+). The catalysed reaction is a D-aminoacyl-tRNA + H2O = a tRNA + a D-alpha-amino acid + H(+). Its function is as follows. An aminoacyl-tRNA editing enzyme that deacylates mischarged D-aminoacyl-tRNAs. Also deacylates mischarged glycyl-tRNA(Ala), protecting cells against glycine mischarging by AlaRS. Acts via tRNA-based rather than protein-based catalysis; rejects L-amino acids rather than detecting D-amino acids in the active site. By recycling D-aminoacyl-tRNA to D-amino acids and free tRNA molecules, this enzyme counteracts the toxicity associated with the formation of D-aminoacyl-tRNA entities in vivo and helps enforce protein L-homochirality. The chain is D-aminoacyl-tRNA deacylase from Clostridium novyi (strain NT).